A 64-amino-acid chain; its full sequence is Large ribosomal subunit protein bL28 (64 aa).

The protein belongs to the bacterial ribosomal protein bL28 family.

The polypeptide is Large ribosomal subunit protein bL28 (Campylobacter jejuni subsp. doylei (strain ATCC BAA-1458 / RM4099 / 269.97)).